We begin with the raw amino-acid sequence, 404 residues long: MQIGQRLGTPLSPSATRVMLLGAGELGKEVIIALQRLGVEVIAVDRYPNAPGHQVAHRAHVIDMTDPDALRALVDAERAHLVVPEIEAIATDALAEIEAAGVAEVIPTARATQLTMNREGIRRLAAEELGLPTSPYAFAQSFDAFRAAVAQIGFPCVVKPVMSSSGKGQSVVRSDADVEPAWQYAMAGGRVNHGRVIVEGFVQFDYEITQLTVRAIDPASLKTRTYFCEPIGHVQVAGDYVESWQPQPMSAKALERSRDIAHRVTSALGGRGIFGVELFVRGDDVWFSEVSPRPHDTGLVTLASQRQSEFELHARAILGLPVEPALATPAASAVIYGGLDEAGIAFEGVRDALAVPGADLRLFGKPESFAKRRMGVALATGANVDEARERAKRAAAAVRPVSAR.

Residues 25-26 (EL) and Glu85 each bind N(1)-(5-phospho-beta-D-ribosyl)glycinamide. Residues Arg118, Lys159, 164-169 (SSGKGQ), 199-202 (EGFV), and Glu207 each bind ATP. The ATP-grasp domain occupies 123–318 (RLAAEELGLP…EFELHARAIL (196 aa)). Positions 277 and 289 each coordinate Mg(2+). N(1)-(5-phospho-beta-D-ribosyl)glycinamide is bound by residues Asp296, Lys365, and 372–373 (RR).

Belongs to the PurK/PurT family. In terms of assembly, homodimer.

It catalyses the reaction N(1)-(5-phospho-beta-D-ribosyl)glycinamide + formate + ATP = N(2)-formyl-N(1)-(5-phospho-beta-D-ribosyl)glycinamide + ADP + phosphate + H(+). It participates in purine metabolism; IMP biosynthesis via de novo pathway; N(2)-formyl-N(1)-(5-phospho-D-ribosyl)glycinamide from N(1)-(5-phospho-D-ribosyl)glycinamide (formate route): step 1/1. Involved in the de novo purine biosynthesis. Catalyzes the transfer of formate to 5-phospho-ribosyl-glycinamide (GAR), producing 5-phospho-ribosyl-N-formylglycinamide (FGAR). Formate is provided by PurU via hydrolysis of 10-formyl-tetrahydrofolate. This Burkholderia thailandensis (strain ATCC 700388 / DSM 13276 / CCUG 48851 / CIP 106301 / E264) protein is Formate-dependent phosphoribosylglycinamide formyltransferase.